The chain runs to 218 residues: Guanylate kinase (218 aa).

In terms of domain architecture, Guanylate kinase-like spans 5-188 (GNLFILSAPS…ALLDLTTIVN (184 aa)). 12-19 (APSGAGKS) serves as a coordination point for ATP.

Belongs to the guanylate kinase family.

It is found in the cytoplasm. The enzyme catalyses GMP + ATP = GDP + ADP. Essential for recycling GMP and indirectly, cGMP. This is Guanylate kinase from Colwellia psychrerythraea (strain 34H / ATCC BAA-681) (Vibrio psychroerythus).